Consider the following 538-residue polypeptide: CTP synthase (538 aa).

Positions 1-266 (MRTKYIFITG…DQKIVDLLNI (266 aa)) are amidoligase domain. Serine 14 lines the CTP pocket. Serine 14 is a binding site for UTP. ATP contacts are provided by residues 15 to 20 (SLGKGL) and aspartate 72. Residues aspartate 72 and glutamate 140 each contribute to the Mg(2+) site. Residues 147-149 (DIE), 187-192 (KTKPTQ), and lysine 223 contribute to the CTP site. UTP-binding positions include 187–192 (KTKPTQ) and lysine 223. 239–241 (KDV) is an ATP binding site. Residues 291 to 533 (NIAIVGKYVN…IEAALRYRKK (243 aa)) enclose the Glutamine amidotransferase type-1 domain. Glycine 353 serves as a coordination point for L-glutamine. Cysteine 380 acts as the Nucleophile; for glutamine hydrolysis in catalysis. L-glutamine contacts are provided by residues 381–384 (LGMQ), glutamate 404, and arginine 461. Catalysis depends on residues histidine 506 and glutamate 508.

The protein belongs to the CTP synthase family. Homotetramer.

It carries out the reaction UTP + L-glutamine + ATP + H2O = CTP + L-glutamate + ADP + phosphate + 2 H(+). The enzyme catalyses L-glutamine + H2O = L-glutamate + NH4(+). The catalysed reaction is UTP + NH4(+) + ATP = CTP + ADP + phosphate + 2 H(+). It functions in the pathway pyrimidine metabolism; CTP biosynthesis via de novo pathway; CTP from UDP: step 2/2. Allosterically activated by GTP, when glutamine is the substrate; GTP has no effect on the reaction when ammonia is the substrate. The allosteric effector GTP functions by stabilizing the protein conformation that binds the tetrahedral intermediate(s) formed during glutamine hydrolysis. Inhibited by the product CTP, via allosteric rather than competitive inhibition. Functionally, catalyzes the ATP-dependent amination of UTP to CTP with either L-glutamine or ammonia as the source of nitrogen. Regulates intracellular CTP levels through interactions with the four ribonucleotide triphosphates. This Syntrophus aciditrophicus (strain SB) protein is CTP synthase.